We begin with the raw amino-acid sequence, 122 residues long: Large ribosomal subunit protein uL18 (122 aa).

The protein belongs to the universal ribosomal protein uL18 family. Part of the 50S ribosomal subunit; part of the 5S rRNA/L5/L18/L25 subcomplex. Contacts the 5S and 23S rRNAs.

Its function is as follows. This is one of the proteins that bind and probably mediate the attachment of the 5S RNA into the large ribosomal subunit, where it forms part of the central protuberance. This Syntrophotalea carbinolica (strain DSM 2380 / NBRC 103641 / GraBd1) (Pelobacter carbinolicus) protein is Large ribosomal subunit protein uL18.